Consider the following 163-residue polypeptide: Neurotrophin-3 (163 aa).

The first 3 residues, 1–3 (IQS), serve as a signal peptide directing secretion. Positions 4–119 (TSMDQGILTE…VLNRTSRRKR (116 aa)) are excised as a propeptide. A glycan (N-linked (GlcNAc...) asparagine) is linked at Asn112.

The protein belongs to the NGF-beta family.

The protein resides in the secreted. Seems to promote the survival of visceral and proprioceptive sensory neurons. The polypeptide is Neurotrophin-3 (NTF3) (Chilabothrus striatus (Haitian boa constrictor)).